The following is a 501-amino-acid chain: Glutamate--tRNA ligase (501 aa).

The 'HIGH' region signature appears at 11 to 21; it reads PSPTGPLHIGG. Positions 260–264 match the 'KMSKS' region motif; that stretch reads KLSKR. Position 263 (Lys263) interacts with ATP.

It belongs to the class-I aminoacyl-tRNA synthetase family. Glutamate--tRNA ligase type 1 subfamily. In terms of assembly, monomer.

The protein resides in the cytoplasm. It carries out the reaction tRNA(Glu) + L-glutamate + ATP = L-glutamyl-tRNA(Glu) + AMP + diphosphate. Catalyzes the attachment of glutamate to tRNA(Glu) in a two-step reaction: glutamate is first activated by ATP to form Glu-AMP and then transferred to the acceptor end of tRNA(Glu). This is Glutamate--tRNA ligase from Flavobacterium johnsoniae (strain ATCC 17061 / DSM 2064 / JCM 8514 / BCRC 14874 / CCUG 350202 / NBRC 14942 / NCIMB 11054 / UW101) (Cytophaga johnsonae).